The sequence spans 266 residues: Regulatory protein RecX (266 aa).

Belongs to the RecX family.

Its subcellular location is the cytoplasm. In terms of biological role, modulates RecA activity. The polypeptide is Regulatory protein RecX (Enterococcus faecalis (strain ATCC 700802 / V583)).